Here is a 195-residue protein sequence, read N- to C-terminus: Protein GrpE (195 aa).

Belongs to the GrpE family. As to quaternary structure, homodimer.

The protein localises to the cytoplasm. Functionally, participates actively in the response to hyperosmotic and heat shock by preventing the aggregation of stress-denatured proteins, in association with DnaK and GrpE. It is the nucleotide exchange factor for DnaK and may function as a thermosensor. Unfolded proteins bind initially to DnaJ; upon interaction with the DnaJ-bound protein, DnaK hydrolyzes its bound ATP, resulting in the formation of a stable complex. GrpE releases ADP from DnaK; ATP binding to DnaK triggers the release of the substrate protein, thus completing the reaction cycle. Several rounds of ATP-dependent interactions between DnaJ, DnaK and GrpE are required for fully efficient folding. This is Protein GrpE from Francisella tularensis subsp. mediasiatica (strain FSC147).